Consider the following 132-residue polypeptide: Small ribosomal subunit protein uS8 (132 aa).

Belongs to the universal ribosomal protein uS8 family. In terms of assembly, part of the 30S ribosomal subunit. Contacts proteins S5 and S12.

Its function is as follows. One of the primary rRNA binding proteins, it binds directly to 16S rRNA central domain where it helps coordinate assembly of the platform of the 30S subunit. In Xanthobacter autotrophicus (strain ATCC BAA-1158 / Py2), this protein is Small ribosomal subunit protein uS8.